The primary structure comprises 447 residues: Argininosuccinate synthase (447 aa).

ATP contacts are provided by residues 17 to 25 (AFSGGLDTS) and Ala-43. Position 99 (Tyr-99) interacts with L-citrulline. Gly-129 and Thr-131 together coordinate ATP. Residues Thr-131, Asn-135, and Asp-136 each contribute to the L-aspartate site. Asn-135 provides a ligand contact to L-citrulline. Position 136 (Asp-136) interacts with ATP. The L-citrulline site is built by Arg-139 and Ser-192. Residue Asp-194 coordinates ATP. L-citrulline-binding residues include Thr-201, Glu-203, and Glu-280.

This sequence belongs to the argininosuccinate synthase family. Type 2 subfamily. Homotetramer.

It is found in the cytoplasm. The enzyme catalyses L-citrulline + L-aspartate + ATP = 2-(N(omega)-L-arginino)succinate + AMP + diphosphate + H(+). The protein operates within amino-acid biosynthesis; L-arginine biosynthesis; L-arginine from L-ornithine and carbamoyl phosphate: step 2/3. The polypeptide is Argininosuccinate synthase (Shigella flexneri serotype 5b (strain 8401)).